The following is a 168-amino-acid chain: Transcription antitermination protein NusB (168 aa).

Belongs to the NusB family.

Functionally, involved in transcription antitermination. Required for transcription of ribosomal RNA (rRNA) genes. Binds specifically to the boxA antiterminator sequence of the ribosomal RNA (rrn) operons. The polypeptide is Transcription antitermination protein NusB (Prosthecochloris aestuarii (strain DSM 271 / SK 413)).